We begin with the raw amino-acid sequence, 311 residues long: Acetyl-coenzyme A carboxylase carboxyl transferase subunit alpha (311 aa).

One can recognise a CoA carboxyltransferase C-terminal domain in the interval lysine 36–glutamate 286.

It belongs to the AccA family. As to quaternary structure, acetyl-CoA carboxylase is a heterohexamer composed of biotin carboxyl carrier protein (AccB), biotin carboxylase (AccC) and two subunits each of ACCase subunit alpha (AccA) and ACCase subunit beta (AccD).

Its subcellular location is the cytoplasm. The enzyme catalyses N(6)-carboxybiotinyl-L-lysyl-[protein] + acetyl-CoA = N(6)-biotinyl-L-lysyl-[protein] + malonyl-CoA. It participates in lipid metabolism; malonyl-CoA biosynthesis; malonyl-CoA from acetyl-CoA: step 1/1. Component of the acetyl coenzyme A carboxylase (ACC) complex. First, biotin carboxylase catalyzes the carboxylation of biotin on its carrier protein (BCCP) and then the CO(2) group is transferred by the carboxyltransferase to acetyl-CoA to form malonyl-CoA. The chain is Acetyl-coenzyme A carboxylase carboxyl transferase subunit alpha from Aliarcobacter butzleri (strain RM4018) (Arcobacter butzleri).